Consider the following 201-residue polypeptide: Eukaryotic translation initiation factor 4E-5 (201 aa).

A disulfide bridge connects residues Cys-122 and Cys-126.

This sequence belongs to the eukaryotic initiation factor 4E family. In terms of assembly, eIF4F is a multi-subunit complex, the composition of which varies with external and internal environmental conditions. It is composed of at least eIF4A, eIF4E and eIF4G. eIF4E is also known to interact with other partners. In terms of tissue distribution, enriched in the germline.

In terms of biological role, recognizes and binds the 7-methylguanosine-containing mRNA cap during an early step in the initiation of protein synthesis and facilitates ribosome binding by inducing the unwinding of the mRNAs secondary structures. All 5 eIF4E proteins bind monomethyl cap structures. Only ife-1, ife-2 and ife-5 bind trimethyl cap structures which result from trans-splicing. Translation of trimethyl cap structure mRNAs may be regulated by intracellular redox state; disulfide bonds change the width and depth of the cap-binding cavity determining selectivity to mRNA caps. The chain is Eukaryotic translation initiation factor 4E-5 (ife-5) from Caenorhabditis elegans.